Consider the following 389-residue polypeptide: Na(+)/H(+) antiporter NhaA (389 aa).

11 helical membrane passes run 14 to 34, 59 to 79, 95 to 115, 124 to 144, 154 to 174, 177 to 197, 213 to 233, 257 to 277, 292 to 312, 328 to 348, and 363 to 383; these read AGGI…NSPL, LILW…GLEV, SLPT…YLLF, AGWA…MALL, VFLL…IALF, TDLS…LVGL, LILW…GVII, PWST…VYVG, IALG…YIAV, IAPV…IASL, and LGTL…LSKV.

It belongs to the NhaA Na(+)/H(+) (TC 2.A.33) antiporter family.

It is found in the cell inner membrane. It catalyses the reaction Na(+)(in) + 2 H(+)(out) = Na(+)(out) + 2 H(+)(in). Its function is as follows. Na(+)/H(+) antiporter that extrudes sodium in exchange for external protons. This is Na(+)/H(+) antiporter NhaA from Shewanella baltica (strain OS155 / ATCC BAA-1091).